Here is a 287-residue protein sequence, read N- to C-terminus: Proteasome assembly chaperone 1 (287 aa).

The tract at residues Met1–Arg32 is disordered. A compositionally biased stretch (acidic residues) spans Asp17–Arg32.

It belongs to the PSMG1 family. Forms a heterodimer with psmg2. Degraded by the proteasome upon completion of 20S proteasome maturation.

The protein resides in the cytoplasm. Its subcellular location is the endoplasmic reticulum. Its function is as follows. Chaperone protein which promotes assembly of the 20S proteasome as part of a heterodimer with psmg2. This chain is Proteasome assembly chaperone 1, found in Xenopus tropicalis (Western clawed frog).